Consider the following 30-residue polypeptide: Cycloviolacin-O2 (30 aa).

A cross-link (cyclopeptide (Gly-Asn)) is located at residues G1–N30. Cystine bridges form between C4–C20, C8–C22, and C13–C27.

This is a cyclic peptide.

Probably participates in a plant defense mechanism. This is Cycloviolacin-O2 from Viola biflora (Yellow wood violet).